The sequence spans 226 residues: Small ribosomal subunit protein uS5 (226 aa).

Residues 1–71 (MEDIKHNKKP…RKNEKRTKSE (71 aa)) form a disordered region. Over residues 24-54 (ANPQANHANPNNRSASVNNNSVNNNKKNSSR) the composition is skewed to low complexity. The S5 DRBM domain occupies 72–135 (FEEKIVKISR…KMAENNVQKI (64 aa)).

It belongs to the universal ribosomal protein uS5 family. As to quaternary structure, part of the 30S ribosomal subunit. Contacts proteins S4 and S8.

Functionally, with S4 and S12 plays an important role in translational accuracy. In terms of biological role, located at the back of the 30S subunit body where it stabilizes the conformation of the head with respect to the body. The polypeptide is Small ribosomal subunit protein uS5 (Mycoplasmoides gallisepticum (strain R(low / passage 15 / clone 2)) (Mycoplasma gallisepticum)).